Here is a 212-residue protein sequence, read N- to C-terminus: MYLKRTLITLSLITLPIVPFLSYAAESINNTSSTENLAPVTVDSSDPVSDKQGESWWQRSKNNLSTTWNAPQSHDIYIPAITWHNRWTYDKEKTDRYNERPWGAGYGVSRLDKDGDWHGLYIMAFKDSFNKWEPIGGYGYEKRWRPTSDQDFQLGLGFTAGVTMRDNWNYIPIPVLLPLASISYSKLSFQATYIPGTYNNGNVFFAWLRWQI.

An N-terminal signal peptide occupies residues 1–24 (MYLKRTLITLSLITLPIVPFLSYA). Positions 36-47 (NLAPVTVDSSDP) are enriched in polar residues. Positions 36-56 (NLAPVTVDSSDPVSDKQGESW) are disordered. Catalysis depends on residues H84, D127, and S128.

This sequence belongs to the lipid A palmitoyltransferase family. Homodimer.

The protein localises to the cell outer membrane. It catalyses the reaction a lipid A + a 1,2-diacyl-sn-glycero-3-phosphocholine = a hepta-acyl lipid A + a 2-acyl-sn-glycero-3-phosphocholine. The catalysed reaction is a lipid IVA + a 1,2-diacyl-sn-glycero-3-phosphocholine = a lipid IVB + a 2-acyl-sn-glycero-3-phosphocholine. The enzyme catalyses a lipid IIA + a 1,2-diacyl-sn-glycero-3-phosphocholine = a lipid IIB + a 2-acyl-sn-glycero-3-phosphocholine. Functionally, transfers a fatty acid residue from the sn-1 position of a phospholipid to the N-linked hydroxyfatty acid chain on the proximal unit of lipid A or its precursors. The sequence is that of Lipid A acyltransferase PagP from Pectobacterium carotovorum subsp. carotovorum (strain PC1).